A 993-amino-acid polypeptide reads, in one-letter code: Vacuolar membrane protease (993 aa).

At 1 to 24 (MSPAMANPRVRKFNPIAFTPLPVT) the chain is on the cytoplasmic side. Residues 25-45 (LITTIVYLAVLILVLVTYLVV) traverse the membrane as a helical segment. The Vacuolar portion of the chain corresponds to 46 to 391 (PPAPTLEMSP…SAFAVFRLHT (346 aa)). N-linked (GlcNAc...) asparagine glycans are attached at residues Asn59, Asn116, and Asn119. Residues His175 and Asp187 each coordinate Zn(2+). The Proton acceptor role is filled by Glu221. Position 222 (Glu222) interacts with Zn(2+). N-linked (GlcNAc...) asparagine glycosylation is present at Asn238. Glu247 and His320 together coordinate Zn(2+). Residues 392-412 (LFALSVTLLVSAPLVLFITSI) traverse the membrane as a helical segment. Residues 413–447 (ALSKTDRMYLFSMSKSLGGTSETVSLRGLRGLFRT) are Cytoplasmic-facing. Residues 448-468 (PIILTVTTVITIGLAYLLEKI) traverse the membrane as a helical segment. Residues 469–475 (NPYIVHS) lie on the Vacuolar side of the membrane. The helical transmembrane segment at 476 to 496 (SQFAVWSMMLSVWIFVAWFLA) threads the bilayer. Topologically, residues 497 to 509 (RVADFFRPSALHR) are cytoplasmic. The helical transmembrane segment at 510-530 (AYSYTWIFIATWIMLVISTVY) threads the bilayer. Residues 531-534 (ANQK) lie on the Vacuolar side of the membrane. Residues 535 to 555 (GIAAGYFIFFYFAAVFLATWV) form a helical membrane-spanning segment. Over 556–672 (SYLELFSLPR…WSWTLPRWTW (117 aa)) the chain is Cytoplasmic. The interval 579–621 (RRSSSLSSRLLTPSADELPSDIGPNGAENLGDPDETDPTESTS) is disordered. The helical transmembrane segment at 673–693 (ILQLLLLAPIVIILVGQVGLL) threads the bilayer. Residues 694 to 709 (LTTAMSQIGSDGVSTF) lie on the Vacuolar side of the membrane. Residues 710–730 (IVYLACALLSTLLFAPLFPFI) traverse the membrane as a helical segment. The Cytoplasmic segment spans residues 731 to 737 (HRFTYHV). A helical transmembrane segment spans residues 738–758 (PTFLLLIFIGTLIYNLVAFPF). Topologically, residues 759 to 993 (SPANRLKIFF…VEASHDFIIQ (235 aa)) are vacuolar. 3 N-linked (GlcNAc...) asparagine glycosylation sites follow: Asn806, Asn847, and Asn955.

It belongs to the peptidase M28 family. The cofactor is Zn(2+).

The protein localises to the vacuole membrane. Functionally, may be involved in vacuolar sorting and osmoregulation. The protein is Vacuolar membrane protease of Paracoccidioides lutzii (strain ATCC MYA-826 / Pb01) (Paracoccidioides brasiliensis).